Reading from the N-terminus, the 220-residue chain is UPF0319 protein YccT (220 aa).

The N-terminal stretch at 1–20 is a signal peptide; that stretch reads MKTGIVTTLIALCLPVSVFA.

The protein belongs to the UPF0319 family.

The polypeptide is UPF0319 protein YccT (Escherichia coli (strain 55989 / EAEC)).